The chain runs to 496 residues: Cytochrome P450 monooxygenase claT (496 aa).

Residues Leu-2–Val-22 traverse the membrane as a helical segment. Residue Cys-423 coordinates heme.

It belongs to the cytochrome P450 family. Requires heme as cofactor.

The protein resides in the membrane. It catalyses the reaction wigandol + 4 reduced [NADPH--hemoprotein reductase] + 4 O2 = arnebinol A + 4 oxidized [NADPH--hemoprotein reductase] + 6 H2O + 4 H(+). The catalysed reaction is arnebinol A + reduced [NADPH--hemoprotein reductase] + O2 = clavilactone A + oxidized [NADPH--hemoprotein reductase] + H2O + H(+). It carries out the reaction (2E)-geranylhydroquinone + reduced [NADPH--hemoprotein reductase] + O2 = isoalliodorol + oxidized [NADPH--hemoprotein reductase] + H2O + H(+). The protein operates within secondary metabolite biosynthesis; terpenoid biosynthesis. Functionally, cytochrome P450 monooxygenase; part of the gene cluster that mediates the biosynthesis of clavilactone A, a meroterpenoid that features a unique benzo-fused ten-membered carbocyclic ring unit with an alpha,beta-epoxy-gamma-lactone moiety, forming an intriguing 10/5/3 tricyclic nested skeleton. ClaR, ClaS and ClaT are sufficient to produce clavilactone A. Within the pathway, claT acts as a multifunctional cytochrome P450 monooxygenase that catalyzes a ten-electron oxidation to accomplish the biosynthesis of the 10/5/3 tricyclic nested skeleton in clavilactones. The biosynthesis begins with the prenyltransferase claS that transfers geranyl pyrophosphate (GPP) to hydroquinone to produces geranylhydroquinone. The cytochrome P450 monooxygenase claR then catalyzes the diradical coupling reaction between the intramolecular hydroquinone and allyl moieties to form the benzo-fused ten-membered carbocyclic ring unit of wigantol. Finally the cytochrome P450 monooxygenase claT exquisitely and stereoselectively assembles the alpha,beta-epoxy-gamma-lactone moiety, producing clavilactone A via arnebinol A. This chain is Cytochrome P450 monooxygenase claT, found in Ampulloclitocybe clavipes (Club foot).